The chain runs to 320 residues: Tetraacyldisaccharide 4'-kinase (320 aa).

53–60 (SVGGNGKT) contributes to the ATP binding site.

It belongs to the LpxK family.

The catalysed reaction is a lipid A disaccharide + ATP = a lipid IVA + ADP + H(+). It participates in glycolipid biosynthesis; lipid IV(A) biosynthesis; lipid IV(A) from (3R)-3-hydroxytetradecanoyl-[acyl-carrier-protein] and UDP-N-acetyl-alpha-D-glucosamine: step 6/6. Its function is as follows. Transfers the gamma-phosphate of ATP to the 4'-position of a tetraacyldisaccharide 1-phosphate intermediate (termed DS-1-P) to form tetraacyldisaccharide 1,4'-bis-phosphate (lipid IVA). The sequence is that of Tetraacyldisaccharide 4'-kinase from Psychromonas ingrahamii (strain DSM 17664 / CCUG 51855 / 37).